Reading from the N-terminus, the 575-residue chain is MLHSQKRIWKKIGLCLLSFILGITVFTGSFGSKAEAAVAGDFQVSVMGPLAKVTDWNSFKNQLTTLKNNGVYAITTDVWWGYVESAGDNQFDWSYYKTYADTVKQAGLKWVPIISTHRCGGNVGDDCNIPLPSWLWSKGSADEMQFKDESGYVNNESLSPFWSGVGKQYDELYASFAQNFSAYKDMIPKIYLSGGPSGELRYPSYYPAAGWSYPARGKFQVYTETAKSAFRTAMTTKYGSLDKINAAWGTNLTSMSQISPPTDSDGFYTGGGYNITYGKDFLSWYQSVLENHLGVIGAAAHKNFDPVFGVRIGAKISGIHWQMNNPSMPHSAEHAGGYYDYNRLIQKFKDTDLDLTFTALEMYDSGTAPNYSLPSTLVDTVSSIANSKGVRLNGENALPTGGSGFQKIEEKITRFGYNGFTLLRINNIVNSDGSPTAEMSSFKNYVIKHAKPAGDGGGNPVNSVTIYYKKGFNSPYIHYRPAGGTWTDVPGVKMPDSEISGYAKITLDIGSASQLEAAFNDGNNQWDSNNMRNYFFSPGTSTYIPGTNGTAGSIQAGPPITSSDFQALPAYEMSI.

The first 36 residues, 1 to 36 (MLHSQKRIWKKIGLCLLSFILGITVFTGSFGSKAEA), serve as a signal peptide directing secretion. A substrate-binding site is contributed by D77. Positions 84 and 88 each coordinate Ca(2+). 2 residues coordinate substrate: H117 and D125. A disulfide bridge connects residues C119 and C127. E171 serves as a coordination point for Ca(2+). Residue E199 is the Proton donor of the active site. Substrate-binding residues include K315, H320, and T358. The Proton acceptor role is filled by E395. Residues 396–397 (NA) and R424 each bind substrate.

The protein belongs to the glycosyl hydrolase 14 family. Monomer. It depends on Ca(2+) as a cofactor.

The catalysed reaction is Hydrolysis of (1-&gt;4)-alpha-D-glucosidic linkages in polysaccharides so as to remove successive maltose units from the non-reducing ends of the chains.. In Niallia circulans (Bacillus circulans), this protein is Beta-amylase.